The chain runs to 330 residues: GMP reductase (330 aa).

The active-site Thioimidate intermediate is the cysteine 180. 209 to 232 is an NADP(+) binding site; that stretch reads LIADGGIRHNGDIAKSVRFGASMV.

It belongs to the IMPDH/GMPR family. GuaC type 2 subfamily.

It catalyses the reaction IMP + NH4(+) + NADP(+) = GMP + NADPH + 2 H(+). Functionally, catalyzes the irreversible NADPH-dependent deamination of GMP to IMP. It functions in the conversion of nucleobase, nucleoside and nucleotide derivatives of G to A nucleotides, and in maintaining the intracellular balance of A and G nucleotides. The protein is GMP reductase of Lactobacillus johnsonii (strain CNCM I-12250 / La1 / NCC 533).